Consider the following 316-residue polypeptide: Very-long-chain 3-oxooacyl-coA reductase let-767 (316 aa).

Residues 52–80 (ITGA…VSRT) and Asp106 contribute to the NADP(+) site. Position 189 (Ser189) interacts with substrate. The active-site Proton acceptor is Tyr202. Residue Lys206 participates in NADP(+) binding.

Belongs to the short-chain dehydrogenases/reductases (SDR) family. 17-beta-HSD 3 subfamily.

It catalyses the reaction a very-long-chain (3R)-3-hydroxyacyl-CoA + NADP(+) = a very-long-chain 3-oxoacyl-CoA + NADPH + H(+). The protein operates within lipid metabolism; fatty acid biosynthesis. In terms of biological role, required for branched chain fatty acid synthesis. Catalyzes the reduction of the 3-ketoacyl-CoA intermediate that is formed in each cycle of fatty acid elongation. Very long-chain fatty acids (VLCFAs) serve as precursors for ceramide and sphingolipids. May also be required for sterol hormone production. The protein is Very-long-chain 3-oxooacyl-coA reductase let-767 of Caenorhabditis briggsae.